Here is a 188-residue protein sequence, read N- to C-terminus: GTPase KRas (188 aa).

Residues 10-18 (GAGGVGKSA), 29-35 (VDEYDPT), 59-60 (AG), and 116-119 (NKCD) contribute to the GTP site. Residues 32–40 (YDPTIEDSY) carry the Effector region motif. A disordered region spans residues 167–188 (KEKMSKEGKKKKKKSKTKCVLM). Position 185 is a cysteine methyl ester (Cys185). Cys185 carries S-farnesyl cysteine lipidation. Positions 186-188 (VLM) are cleaved as a propeptide — removed in mature form.

It belongs to the small GTPase superfamily. Ras family.

The protein resides in the cell membrane. It localises to the cytoplasm. It catalyses the reaction GTP + H2O = GDP + phosphate + H(+). Alternates between an inactive form bound to GDP and an active form bound to GTP. Activated by a guanine nucleotide-exchange factor (GEF) and inactivated by a GTPase-activating protein (GAP). In terms of biological role, ras proteins bind GDP/GTP and possess intrinsic GTPase activity. Plays an important role in the regulation of cell proliferation. May play a role in promoting oncogenic events by inducing transcriptional silencing of tumor suppressor genes (TSGs). The chain is GTPase KRas (kras) from Cyprinus carpio (Common carp).